The primary structure comprises 349 residues: tRNA pseudouridine synthase D (349 aa).

F27 is a binding site for substrate. D80 functions as the Nucleophile in the catalytic mechanism. N129 contacts substrate. In terms of domain architecture, TRUD spans G155–L303. F329 contributes to the substrate binding site.

The protein belongs to the pseudouridine synthase TruD family.

It catalyses the reaction uridine(13) in tRNA = pseudouridine(13) in tRNA. Functionally, responsible for synthesis of pseudouridine from uracil-13 in transfer RNAs. This Escherichia coli O7:K1 (strain IAI39 / ExPEC) protein is tRNA pseudouridine synthase D.